Here is a 457-residue protein sequence, read N- to C-terminus: tRNA modification GTPase MnmE (457 aa).

Residues Arg25, Glu87, and Arg126 each contribute to the (6S)-5-formyl-5,6,7,8-tetrahydrofolate site. The TrmE-type G domain maps to 223 to 377 (GISTAIIGRP…IEERINNLFF (155 aa)). Position 233 (Asn233) interacts with K(+). GTP-binding positions include 233-238 (NVGKSS), 252-258 (TDIAGTT), and 277-280 (DTAG). Ser237 serves as a coordination point for Mg(2+). Residues Thr252, Ile254, and Thr257 each coordinate K(+). Thr258 contacts Mg(2+). A (6S)-5-formyl-5,6,7,8-tetrahydrofolate-binding site is contributed by Lys457.

This sequence belongs to the TRAFAC class TrmE-Era-EngA-EngB-Septin-like GTPase superfamily. TrmE GTPase family. Homodimer. Heterotetramer of two MnmE and two MnmG subunits. It depends on K(+) as a cofactor.

Its subcellular location is the cytoplasm. Its function is as follows. Exhibits a very high intrinsic GTPase hydrolysis rate. Involved in the addition of a carboxymethylaminomethyl (cmnm) group at the wobble position (U34) of certain tRNAs, forming tRNA-cmnm(5)s(2)U34. In Streptococcus pneumoniae serotype 4 (strain ATCC BAA-334 / TIGR4), this protein is tRNA modification GTPase MnmE.